The following is a 363-amino-acid chain: Flagellar P-ring protein (363 aa).

Positions 1–20 are cleaved as a signal peptide; the sequence is MKIKVLLAVALLAMTVPVKA.

This sequence belongs to the FlgI family. In terms of assembly, the basal body constitutes a major portion of the flagellar organelle and consists of four rings (L,P,S, and M) mounted on a central rod.

Its subcellular location is the periplasm. It is found in the bacterial flagellum basal body. Assembles around the rod to form the L-ring and probably protects the motor/basal body from shearing forces during rotation. The sequence is that of Flagellar P-ring protein from Shewanella amazonensis (strain ATCC BAA-1098 / SB2B).